Consider the following 295-residue polypeptide: Aquaporin-9 (295 aa).

Topologically, residues 1–24 (MQPEGAEKGKSFKQRLVLKSSLAK) are cytoplasmic. A helical transmembrane segment spans residues 25–43 (ETLSEFLGTFILIVLGCGC). At 44-57 (VAQAILSRGRFGGV) the chain is on the extracellular side. Residues 58-77 (ITINVGFSMAVAMAIYVAGG) form a helical membrane-spanning segment. Topologically, residues 78–79 (VS) are cytoplasmic. Positions 80-92 (GGHINPAVSLAMC) form an intramembrane region, discontinuously helical. The NPA 1 signature appears at 84-86 (NPA). Residues 93-98 (LFGRMK) are Cytoplasmic-facing. A helical membrane pass occupies residues 99–123 (WFKLPFYVGAQFLGAFVGAATVFGI). The Extracellular segment spans residues 124-160 (YYDGLMSFAGGKLLIVGENATAHIFATYPAPYLSLAN). A helical membrane pass occupies residues 161 to 178 (AFADQVVATMILLIIVFA). At 179 to 190 (IFDSRNLGAPRG) the chain is on the cytoplasmic side. A helical membrane pass occupies residues 191–207 (LEPIAIGLLIIVIASSL). Over 208-210 (GLN) the chain is Extracellular. The segment at residues 211-225 (SGCAMNPARDLSPRL) is an intramembrane region (discontinuously helical). Residues 216–218 (NPA) carry the NPA 2 motif. The Extracellular portion of the chain corresponds to 226–243 (FTALAGWGFEVFRAGNNF). The helical transmembrane segment at 244-264 (WWIPVVGPLVGAVIGGLIYVL) threads the bilayer. The Cytoplasmic segment spans residues 265 to 295 (VIEIHHPEPDSVFKTEQSEDKPEKYELSVIM).

Belongs to the MIP/aquaporin (TC 1.A.8) family. In terms of assembly, homotetramer; each monomer provides an independent glycerol/water pore. In terms of tissue distribution, highly expressed in peripheral leukocytes. Also expressed in liver, lung, and spleen.

It localises to the cell membrane. The protein localises to the basolateral cell membrane. The enzyme catalyses glycerol(in) = glycerol(out). The catalysed reaction is H2O(in) = H2O(out). It catalyses the reaction urea(in) = urea(out). It carries out the reaction (S)-lactate(in) = (S)-lactate(out). The enzyme catalyses NH4(+)(in) = NH4(+)(out). The catalysed reaction is uracil(in) = uracil(out). It catalyses the reaction adenine(out) = adenine(in). It carries out the reaction 3-hydroxybutanoate(in) = 3-hydroxybutanoate(out). The enzyme catalyses D-sorbitol(in) = D-sorbitol(out). The catalysed reaction is D-mannitol(in) = D-mannitol(out). It catalyses the reaction H2O2(out) = H2O2(in). It carries out the reaction arsenite(in) = arsenite(out). The enzyme catalyses selenite(in) = selenite(out). In terms of biological role, aquaglyceroporins form homotetrameric transmembrane channels, with each monomer independently mediating glycerol and water transport across the plasma membrane along their osmotic gradient. AQP9 is the primary route for glycerol uptake in hepatocytes, supporting hepatic gluconeogenesis. It exhibits broad specificity and may transport various small, non-charged solutes, including carbamides, polyols, purines, and pyrimidines. AQP9 may also facilitate hepatic urea extrusion. Due to its permeability to lactate, AQP9 might participate in the astrocyte-to-neuron lactate shuttle, supplying neurons with energy. Additionally, AQP9 is permeable to arsenite, contributing to arsenic excretion by the liver and providing partial protection against arsenic toxicity. It is also permeable to H2O2 in vivo. Could also be permeable to ammonium. The sequence is that of Aquaporin-9 from Homo sapiens (Human).